The primary structure comprises 804 residues: Phenylalanine--tRNA ligase beta subunit (804 aa).

The tRNA-binding domain maps to 40–153; it reads PLPDLRVVVG…SSYAVGEPFA (114 aa). A B5 domain is found at 400-476; the sequence is PALLVLPFRP…RLHGYDNIEA (77 aa). Positions 454, 460, 463, and 464 each coordinate Mg(2+). The 93-residue stretch at 710 to 802 folds into the FDX-ACB domain; that stretch reads SKFPAVQRDL…AESKLGAVIR (93 aa).

This sequence belongs to the phenylalanyl-tRNA synthetase beta subunit family. Type 1 subfamily. As to quaternary structure, tetramer of two alpha and two beta subunits. Mg(2+) is required as a cofactor.

It localises to the cytoplasm. The enzyme catalyses tRNA(Phe) + L-phenylalanine + ATP = L-phenylalanyl-tRNA(Phe) + AMP + diphosphate + H(+). This chain is Phenylalanine--tRNA ligase beta subunit, found in Chlorobium luteolum (strain DSM 273 / BCRC 81028 / 2530) (Pelodictyon luteolum).